The chain runs to 254 residues: Leucyl/phenylalanyl-tRNA--protein transferase (254 aa).

Belongs to the L/F-transferase family.

The protein localises to the cytoplasm. It carries out the reaction N-terminal L-lysyl-[protein] + L-leucyl-tRNA(Leu) = N-terminal L-leucyl-L-lysyl-[protein] + tRNA(Leu) + H(+). It catalyses the reaction N-terminal L-arginyl-[protein] + L-leucyl-tRNA(Leu) = N-terminal L-leucyl-L-arginyl-[protein] + tRNA(Leu) + H(+). The enzyme catalyses L-phenylalanyl-tRNA(Phe) + an N-terminal L-alpha-aminoacyl-[protein] = an N-terminal L-phenylalanyl-L-alpha-aminoacyl-[protein] + tRNA(Phe). Its function is as follows. Functions in the N-end rule pathway of protein degradation where it conjugates Leu, Phe and, less efficiently, Met from aminoacyl-tRNAs to the N-termini of proteins containing an N-terminal arginine or lysine. The polypeptide is Leucyl/phenylalanyl-tRNA--protein transferase (Burkholderia lata (strain ATCC 17760 / DSM 23089 / LMG 22485 / NCIMB 9086 / R18194 / 383)).